A 1062-amino-acid polypeptide reads, in one-letter code: Zinc finger protein swm (1062 aa).

The 69-residue stretch at 7 to 75 folds into the PWI domain; that stretch reads DKLKDWLSVV…ERLFDAIASE (69 aa). 2 disordered regions span residues 119 to 145 and 171 to 340; these read ADSPPPPPKDNVIKPDSNQVKLEQASQ and KPAF…PDRV. Residues 134–145 show a composition bias toward polar residues; the sequence is DSNQVKLEQASQ. The segment covering 172 to 182 has biased composition (basic and acidic residues); sequence PAFDHKTKDSH. Residues 197–207 are compositionally biased toward low complexity; that stretch reads SASPPGRSSGV. A compositionally biased stretch (gly residues) spans 208 to 220; sequence SGSGGGGPGGAGL. A compositionally biased stretch (basic residues) spans 234 to 249; it reads SRRRRASLRSRSRSRS. Composition is skewed to basic and acidic residues over residues 264-273 and 294-310; these read RRVNEREKTQ and RNFDRRRIGGNADDRPR. Polar residues predominate over residues 322–340; that stretch reads RSMSPERNARRNQNSPDRV. A C3H1-type zinc finger spans residues 363–391; it reads SHPRQRCRDFDEKGYCVRGETCPWDHGVN. Residues 416–463 form a disordered region; sequence EIWARSGGPPPGAGQGPVPPPTQPGQTTINPFSGNVRPTTLMSGSGPS. Over residues 423–438 the composition is skewed to pro residues; the sequence is GPPPGAGQGPVPPPTQ. The segment covering 444–461 has biased composition (polar residues); sequence INPFSGNVRPTTLMSGSG. The region spanning 561–635 is the RRM domain; sequence SSLELRKVPR…RFIKVFWHND (75 aa). 5 disordered regions span residues 666-704, 716-741, 822-847, 886-920, and 1004-1062; these read NVPAVPTPNADGAKISNANPLTEAGAGNIGTPATEQANT, TTTAGGSAGGAAGAGAPGSGRPLNPA, QDQLQAQMQQQQQQQQPPVKKTKEQQ, SAANNKSTHYAPASGAPGGGAGRKRPNLPEGPTRV, and APVE…SWRR. Residues 721–733 show a composition bias toward gly residues; the sequence is GSAGGAAGAGAPG. Residues 823–840 show a composition bias toward low complexity; the sequence is DQLQAQMQQQQQQQQPPV. Positions 1018 to 1037 are enriched in polar residues; the sequence is SLENPKQLIQSVSESESLLG. Residues 1046–1056 are compositionally biased toward acidic residues; the sequence is LEDEEEDEESE.

The protein localises to the nucleus. Functionally, negatively regulates Hedgehog (hh) protein signal in wing development. Regulates neural-specific glycosylation by binding to FucTA mRNA and facilitating its nuclear export in neural cells. This is Zinc finger protein swm from Drosophila melanogaster (Fruit fly).